A 240-amino-acid chain; its full sequence is Ubiquinone biosynthesis O-methyltransferase (240 aa).

Positions 44, 64, 85, and 129 each coordinate S-adenosyl-L-methionine.

This sequence belongs to the methyltransferase superfamily. UbiG/COQ3 family.

It catalyses the reaction a 3-demethylubiquinol + S-adenosyl-L-methionine = a ubiquinol + S-adenosyl-L-homocysteine + H(+). It carries out the reaction a 3-(all-trans-polyprenyl)benzene-1,2-diol + S-adenosyl-L-methionine = a 2-methoxy-6-(all-trans-polyprenyl)phenol + S-adenosyl-L-homocysteine + H(+). It participates in cofactor biosynthesis; ubiquinone biosynthesis. O-methyltransferase that catalyzes the 2 O-methylation steps in the ubiquinone biosynthetic pathway. The chain is Ubiquinone biosynthesis O-methyltransferase from Escherichia coli O6:H1 (strain CFT073 / ATCC 700928 / UPEC).